Consider the following 305-residue polypeptide: GTPase Era (305 aa).

An Era-type G domain is found at 11–181 (RSGFVSFVGR…IKVMTDLLPE (171 aa)). Residues 19 to 26 (GRPNTGKS) form a G1 region. 19-26 (GRPNTGKS) lines the GTP pocket. Residues 45 to 49 (ETTRH) form a G2 region. Positions 66 to 69 (DTPG) are G3. Residues 66 to 70 (DTPGL) and 130 to 133 (TKAD) contribute to the GTP site. The interval 130-133 (TKAD) is G4. The G5 stretch occupies residues 160–162 (VSS). Residues 212–291 (LKNELPHSVA…FLDLRIKVLK (80 aa)) form the KH type-2 domain.

This sequence belongs to the TRAFAC class TrmE-Era-EngA-EngB-Septin-like GTPase superfamily. Era GTPase family. In terms of assembly, monomer.

The protein localises to the cytoplasm. It localises to the cell membrane. Functionally, an essential GTPase that binds both GDP and GTP, with rapid nucleotide exchange. Plays a role in 16S rRNA processing and 30S ribosomal subunit biogenesis and possibly also in cell cycle regulation and energy metabolism. This is GTPase Era from Corynebacterium glutamicum (strain ATCC 13032 / DSM 20300 / JCM 1318 / BCRC 11384 / CCUG 27702 / LMG 3730 / NBRC 12168 / NCIMB 10025 / NRRL B-2784 / 534).